The chain runs to 316 residues: 1-phosphofructokinase (316 aa).

ATP contacts are provided by residues 225–230 (SMGAGG) and 256–257 (GD). The active-site Proton acceptor is aspartate 257.

Belongs to the carbohydrate kinase PfkB family.

It catalyses the reaction beta-D-fructose 1-phosphate + ATP = beta-D-fructose 1,6-bisphosphate + ADP + H(+). Its function is as follows. Catalyzes the ATP-dependent phosphorylation of fructose-l-phosphate to fructose-l,6-bisphosphate. The sequence is that of 1-phosphofructokinase from Rhodobacter capsulatus (Rhodopseudomonas capsulata).